A 473-amino-acid polypeptide reads, in one-letter code: Venom prothrombin activator vestarin-D1 (473 aa).

The first 20 residues, 1 to 20 (MAPQLLLCLIQTFLWSLPEA), serve as a signal peptide directing secretion. The propeptide occupies 21–40 (ESNVFLKSNVANRFLQRTKR). One can recognise a Gla domain in the interval 41–86 (ANSGFEEIYPANFERECVEERCSKEEAREVFEDDEKTEAFWTVYVD). 4-carboxyglutamate is present on residues glutamate 46, glutamate 47, glutamate 54, glutamate 56, glutamate 59, glutamate 60, glutamate 65, glutamate 66, glutamate 69, glutamate 72, and glutamate 75. Cysteine 57 and cysteine 62 are disulfide-bonded. Residues 86–122 (DGDQCLSNPCHYGGTCKDGIGSYTCTCLAGYEGKNCE) form the EGF-like 1; calcium-binding domain. Disulfide bonds link cysteine 90–cysteine 101, cysteine 95–cysteine 110, cysteine 112–cysteine 121, cysteine 129–cysteine 140, cysteine 136–cysteine 149, cysteine 151–cysteine 164, cysteine 172–cysteine 335, cysteine 235–cysteine 240, cysteine 383–cysteine 397, and cysteine 408–cysteine 436. Residue serine 92 is glycosylated (O-linked (Hex...) serine). In terms of domain architecture, EGF-like 2 spans 129–164 (CRVDNGNCWHFCKPVQNDTQCSCAEGYRLGDNGFSC). Positions 182 to 228 (REASLPDFQTDFSDDYDAIDENNLIETVQSQSATLLKKSDNPNPDIR) are cleaved as a propeptide — activation peptide. Residues 229-460 (IVNGLDCKLG…FLPWIKTIMR (232 aa)) form the Peptidase S1 domain. Histidine 270 acts as the Charge relay system in catalysis. An N-linked (GlcNAc...) asparagine glycan is attached at asparagine 273. Aspartate 315 functions as the Charge relay system in the catalytic mechanism. The active-site Charge relay system is serine 412.

It belongs to the peptidase S1 family. Snake venom subfamily. Heterodimer of a light chain and a heavy chain; disulfide-linked. The vitamin K-dependent, enzymatic carboxylation of some glutamate residues allows the modified protein to bind calcium. Expressed by the venom gland.

It localises to the secreted. The enzyme catalyses Selective cleavage of Arg-|-Thr and then Arg-|-Ile bonds in prothrombin to form thrombin.. In terms of biological role, snake prothrombin activator that attacks the hemostatic system of prey. This protein is functionally similar to blood coagulation factor Xa. The protein is Venom prothrombin activator vestarin-D1 of Demansia vestigiata (Lesser black whip snake).